A 426-amino-acid chain; its full sequence is Proline--tRNA ligase (426 aa).

It belongs to the class-II aminoacyl-tRNA synthetase family. ProS type 2 subfamily. Homodimer.

The protein localises to the cytoplasm. The enzyme catalyses tRNA(Pro) + L-proline + ATP = L-prolyl-tRNA(Pro) + AMP + diphosphate. Its function is as follows. Catalyzes the attachment of proline to tRNA(Pro) in a two-step reaction: proline is first activated by ATP to form Pro-AMP and then transferred to the acceptor end of tRNA(Pro). The polypeptide is Proline--tRNA ligase (Ehrlichia ruminantium (strain Gardel)).